Consider the following 1420-residue polypeptide: Apolipoprotein(a) (1420 aa).

Low complexity predominate over residues 19–30 (TAVAPPNVTPVP). Positions 19 to 46 (TAVAPPNVTPVPSLEAPSEQAPTEQRPG) are disordered. Kringle domains are found at residues 49-127 (ECYH…LTQC), 163-241 (ECYH…LTQC), 277-355 (ECYH…LTQC), 391-469 (ECYH…LTRC), and 505-583 (ECYY…LTQC). 15 cysteine pairs are disulfide-bonded: Cys50/Cys127, Cys71/Cys110, Cys99/Cys122, Cys164/Cys241, Cys185/Cys224, Cys213/Cys236, Cys278/Cys355, Cys299/Cys338, Cys327/Cys350, Cys392/Cys469, Cys413/Cys452, Cys441/Cys464, Cys506/Cys583, Cys527/Cys566, and Cys555/Cys578. Residues 598-617 (PDPSTQASSEEAPTEQSPEV) are disordered. A compositionally biased stretch (polar residues) spans 600 to 616 (PSTQASSEEAPTEQSPE). Kringle domains follow at residues 619–697 (DCYH…LTQC), 725–803 (DCYH…LTQC), 839–917 (DCYQ…LTQC), 953–1031 (DCYH…LTQC), and 1067–1145 (QCYH…LTRC). 19 cysteine pairs are disulfide-bonded: Cys620/Cys697, Cys641/Cys680, Cys669/Cys692, Cys726/Cys803, Cys747/Cys786, Cys775/Cys798, Cys840/Cys917, Cys861/Cys900, Cys889/Cys912, Cys954/Cys1031, Cys975/Cys1014, Cys1003/Cys1026, Cys1068/Cys1145, Cys1089/Cys1128, Cys1117/Cys1140, Cys1217/Cys1233, Cys1309/Cys1376, Cys1339/Cys1355, and Cys1366/Cys1394. The region spanning 1191 to 1418 (IVGGCVAHPH…FVTWIEGVMR (228 aa)) is the Peptidase S1 domain.

It belongs to the peptidase S1 family. Plasminogen subfamily. Disulfide-linked to apo-B100. Binds to fibronectin and decorin. In terms of processing, N- and O-glycosylated.

Apo(a) is the main constituent of lipoprotein(a) (Lp(a)). It has serine proteinase activity and is able of autoproteolysis. Inhibits tissue-type plasminogen activator 1. Lp(a) may be a ligand for megalin/Gp 330. In Macaca mulatta (Rhesus macaque), this protein is Apolipoprotein(a) (LPA).